Consider the following 255-residue polypeptide: 1-(5-phosphoribosyl)-5-[(5-phosphoribosylamino)methylideneamino] imidazole-4-carboxamide isomerase (255 aa).

D12 acts as the Proton acceptor in catalysis. D131 functions as the Proton donor in the catalytic mechanism.

Belongs to the HisA/HisF family.

It is found in the cytoplasm. The enzyme catalyses 1-(5-phospho-beta-D-ribosyl)-5-[(5-phospho-beta-D-ribosylamino)methylideneamino]imidazole-4-carboxamide = 5-[(5-phospho-1-deoxy-D-ribulos-1-ylimino)methylamino]-1-(5-phospho-beta-D-ribosyl)imidazole-4-carboxamide. Its pathway is amino-acid biosynthesis; L-histidine biosynthesis; L-histidine from 5-phospho-alpha-D-ribose 1-diphosphate: step 4/9. The sequence is that of 1-(5-phosphoribosyl)-5-[(5-phosphoribosylamino)methylideneamino] imidazole-4-carboxamide isomerase from Cutibacterium acnes (strain DSM 16379 / KPA171202) (Propionibacterium acnes).